The following is a 175-amino-acid chain: Ribosome maturation factor RimM (175 aa).

Residues 103–175 (EGEYYWSDLI…LLTVDWDPDF (73 aa)) form the PRC barrel domain.

It belongs to the RimM family. Binds ribosomal protein uS19.

It localises to the cytoplasm. In terms of biological role, an accessory protein needed during the final step in the assembly of 30S ribosomal subunit, possibly for assembly of the head region. Essential for efficient processing of 16S rRNA. May be needed both before and after RbfA during the maturation of 16S rRNA. It has affinity for free ribosomal 30S subunits but not for 70S ribosomes. This is Ribosome maturation factor RimM from Nitrosococcus oceani (strain ATCC 19707 / BCRC 17464 / JCM 30415 / NCIMB 11848 / C-107).